Reading from the N-terminus, the 146-residue chain is MRVVLQRSKEASVTVDGEIVGQIPFGLTLLVGITHEDTEKDATYIAEKIANLRIFEDESGKMNHSVLDVEGQVLSISQFTLYGDCRKGRRPNFMDAAKPDYAEHLYDFFNEEVRKQGLHVETGEFGAMMDVSLINDGPVTLIVESK.

Positions glycine 137–proline 138 match the Gly-cisPro motif, important for rejection of L-amino acids motif.

Belongs to the DTD family. Homodimer.

It is found in the cytoplasm. The enzyme catalyses glycyl-tRNA(Ala) + H2O = tRNA(Ala) + glycine + H(+). It carries out the reaction a D-aminoacyl-tRNA + H2O = a tRNA + a D-alpha-amino acid + H(+). An aminoacyl-tRNA editing enzyme that deacylates mischarged D-aminoacyl-tRNAs. Also deacylates mischarged glycyl-tRNA(Ala), protecting cells against glycine mischarging by AlaRS. Acts via tRNA-based rather than protein-based catalysis; rejects L-amino acids rather than detecting D-amino acids in the active site. By recycling D-aminoacyl-tRNA to D-amino acids and free tRNA molecules, this enzyme counteracts the toxicity associated with the formation of D-aminoacyl-tRNA entities in vivo and helps enforce protein L-homochirality. The chain is D-aminoacyl-tRNA deacylase from Bacillus thuringiensis (strain Al Hakam).